Consider the following 255-residue polypeptide: 4-hydroxy-tetrahydrodipicolinate reductase (255 aa).

NAD(+) is bound by residues 9–14 (GFKGRM), 89–91 (GTT), and 115–118 (APNF). Histidine 145 (proton donor/acceptor) is an active-site residue. Histidine 146 provides a ligand contact to (S)-2,3,4,5-tetrahydrodipicolinate. The active-site Proton donor is lysine 149. A (S)-2,3,4,5-tetrahydrodipicolinate-binding site is contributed by 155–156 (GT).

This sequence belongs to the DapB family.

Its subcellular location is the cytoplasm. It catalyses the reaction (S)-2,3,4,5-tetrahydrodipicolinate + NAD(+) + H2O = (2S,4S)-4-hydroxy-2,3,4,5-tetrahydrodipicolinate + NADH + H(+). The catalysed reaction is (S)-2,3,4,5-tetrahydrodipicolinate + NADP(+) + H2O = (2S,4S)-4-hydroxy-2,3,4,5-tetrahydrodipicolinate + NADPH + H(+). Its pathway is amino-acid biosynthesis; L-lysine biosynthesis via DAP pathway; (S)-tetrahydrodipicolinate from L-aspartate: step 4/4. Catalyzes the conversion of 4-hydroxy-tetrahydrodipicolinate (HTPA) to tetrahydrodipicolinate. This Streptococcus mutans serotype c (strain ATCC 700610 / UA159) protein is 4-hydroxy-tetrahydrodipicolinate reductase.